Here is a 181-residue protein sequence, read N- to C-terminus: uncharacterized protein (181 aa).

This is an uncharacterized protein from Acheta domesticus (House cricket).